The following is a 33-amino-acid chain: Thrombin-like enzyme RP34 (33 aa).

A Peptidase S1 domain is found at 1-33; that stretch reads VIGGDEXDINEHRSLALMYXSWSHRFIXXGXLI.

This sequence belongs to the peptidase S1 family. Snake venom subfamily. In terms of assembly, homodimer. As to expression, expressed by the venom gland.

It localises to the secreted. The catalysed reaction is Selective cleavage of Arg-|-Xaa bond in fibrinogen, to form fibrin, and release fibrinopeptide A. The specificity of further degradation of fibrinogen varies with species origin of the enzyme.. Thrombin-like snake venom serine protease that displays clotting activity on fibrinogen. Shows both arginine-ester hydrolase and amidase activities on synthetic substrates. Also shows proteolytic activity toward casein. The polypeptide is Thrombin-like enzyme RP34 (Cerastes cerastes (Horned desert viper)).